The chain runs to 203 residues: AFG2-interacting ribosome maturation factor (203 aa).

Part of the 55LCC heterohexameric ATPase complex composed at least of AIRIM, AFG2A, AFG2B and CINP. Does not associate with pre-60S ribosomal particles. Post-translationally, phosphorylated on serines by CK2 kinase.

Its subcellular location is the nucleus. It localises to the cytoplasm. Its function is as follows. Part of the 55LCC heterohexameric ATPase complex which is chromatin-associated and promotes replisome proteostasis to maintain replication fork progression and genome stability. Required for replication fork progression, sister chromatid cohesion, and chromosome stability. The ATPase activity is specifically enhanced by replication fork DNA and is coupled to cysteine protease-dependent cleavage of replisome substrates in response to replication fork damage. Uses ATPase activity to process replisome substrates in S-phase, facilitating their proteolytic turnover from chromatin to ensure DNA replication and mitotic fidelity. Involved in the cytoplasmic maturation steps of pre-60S ribosomal particles by promoting the release of shuttling protein RSL24D1/RLP24 from the pre-ribosomal particles. In Homo sapiens (Human), this protein is AFG2-interacting ribosome maturation factor.